The sequence spans 974 residues: Translation initiation factor IF-2 (974 aa).

Disordered stretches follow at residues 67–86 (TRKHTSEIKQSDATGKARTI), 101–133 (DVAEGAEQGQAQVAEADDDAELKRREEEARREA), and 146–385 (RQER…TFQA). The span at 105–114 (GAEQGQAQVA) shows a compositional bias: low complexity. Basic and acidic residues-rich tracts occupy residues 121 to 133 (ELKRREEEARREA) and 146 to 181 (RQERLEREEAERRAREEAAEAERRRAEEEAAAKRAA). Low complexity predominate over residues 182–197 (AEAAAAQQAAAQQAAE). Residues 210-261 (EEARAAAERAAQREAAKKAEDAAREAADKARAEQEEIRKRREAAEAEARAIR) show a composition bias toward basic and acidic residues. Residues 313-329 (PAGATPATTQAPAAGAG) are compositionally biased toward low complexity. Gly residues predominate over residues 358-371 (SSGGVDRGWRGGPK). Positions 474–643 (PRPPVVTVMG…LLQAEVLELK (170 aa)) constitute a tr-type G domain. Residues 483–490 (GHVDHGKT) form a G1 region. GTP is bound at residue 483–490 (GHVDHGKT). The segment at 508–512 (GITQH) is G2. The interval 529 to 532 (DTPG) is G3. Residues 529–533 (DTPGH) and 583–586 (NKID) each bind GTP. Residues 583–586 (NKID) are G4. The tract at residues 619 to 621 (SAK) is G5.

The protein belongs to the TRAFAC class translation factor GTPase superfamily. Classic translation factor GTPase family. IF-2 subfamily.

The protein resides in the cytoplasm. In terms of biological role, one of the essential components for the initiation of protein synthesis. Protects formylmethionyl-tRNA from spontaneous hydrolysis and promotes its binding to the 30S ribosomal subunits. Also involved in the hydrolysis of GTP during the formation of the 70S ribosomal complex. In Burkholderia vietnamiensis (strain G4 / LMG 22486) (Burkholderia cepacia (strain R1808)), this protein is Translation initiation factor IF-2.